The primary structure comprises 508 residues: Protein adenylyltransferase Fic (508 aa).

A helical transmembrane segment spans residues 48 to 70 (FYRFALFFIAGSFAAFSFHALTS). 2 TPR repeats span residues 132-165 (ALGA…APKH) and 166-200 (PEVL…CPSN). The Inhibitory (S/T)XXXE(G/N) motif signature appears at 257–262 (SVGIEG). ATP-binding positions include Glu-261 and 342–345 (VGGH). The 136-residue stretch at 311–446 (ITIKDILELH…IRPFVRFIAD (136 aa)) folds into the Fido domain. The active site involves His-389. ATP contacts are provided by residues 393-400 (DGNGRTSR), 425-426 (YY), and Asn-433.

Belongs to the fic family. Homodimer.

The protein localises to the membrane. It catalyses the reaction L-tyrosyl-[protein] + ATP = O-(5'-adenylyl)-L-tyrosyl-[protein] + diphosphate. The catalysed reaction is L-threonyl-[protein] + ATP = 3-O-(5'-adenylyl)-L-threonyl-[protein] + diphosphate. The enzyme catalyses 3-O-(5'-adenylyl)-L-threonyl-[protein] + H2O = L-threonyl-[protein] + AMP + H(+). With respect to regulation, the side chain of Glu-261 determines which of the two opposing activities (AMPylase or de-AMPylase) will take place. In response to endoplasmic reticulum stress, mediates de-AMPylase activity. Adenylyltransferase activity is inhibited by the inhibitory helix present at the N-terminus: Glu-261 binds ATP and competes with ATP-binding at Arg-400, thereby preventing adenylyltransferase activity. In unstressed cells, disengagement of Glu-261 promotes adenylyltransferase activity. Activation dissociates ATP-binding from Glu-261, allowing ordered binding of the entire ATP moiety with the alpha-phosphate in an orientation that is productive for accepting an incoming target hydroxyl side chain. Its function is as follows. Protein that can both mediate the addition of adenosine 5'-monophosphate (AMP) to specific residues of target proteins (AMPylation), and the removal of the same modification from target proteins (de-AMPylation), depending on the context. The side chain of Glu-261 determines which of the two opposing activities (AMPylase or de-AMPylase) will take place. Acts as a key regulator of the unfolded protein response (UPR) by mediating AMPylation or de-AMPylation of Hsc70-3/BiP. In unstressed cells, acts as an adenylyltransferase by mediating AMPylation of Hsc70-3/BiP at 'Thr-518', thereby inactivating it. In response to endoplasmic reticulum stress, acts as a phosphodiesterase by mediating removal of ATP (de-AMPylation) from Hsc70-3/BiP at 'Thr-518', leading to restore HSPA5/BiP activity. The chain is Protein adenylyltransferase Fic from Drosophila persimilis (Fruit fly).